We begin with the raw amino-acid sequence, 249 residues long: Type-1Aa cytolytic delta-endotoxin (249 aa).

This sequence belongs to the cyt1/cyt2 endotoxin family. Post-translationally, active after proteolytic processing.

Kills the larvae of dipteran insects by making pores in the epithelial cell membrane of the insect midgut. Acts on mosquitos and black flies. This chain is Type-1Aa cytolytic delta-endotoxin (cyt1Aa), found in Bacillus thuringiensis subsp. morrisoni.